A 494-amino-acid chain; its full sequence is Guanosine-5'-triphosphate,3'-diphosphate pyrophosphatase (494 aa).

This sequence belongs to the GppA/Ppx family. GppA subfamily.

It catalyses the reaction guanosine 3'-diphosphate 5'-triphosphate + H2O = guanosine 3',5'-bis(diphosphate) + phosphate + H(+). Its pathway is purine metabolism; ppGpp biosynthesis; ppGpp from GTP: step 2/2. Functionally, catalyzes the conversion of pppGpp to ppGpp. Guanosine pentaphosphate (pppGpp) is a cytoplasmic signaling molecule which together with ppGpp controls the 'stringent response', an adaptive process that allows bacteria to respond to amino acid starvation, resulting in the coordinated regulation of numerous cellular activities. This is Guanosine-5'-triphosphate,3'-diphosphate pyrophosphatase from Escherichia coli O6:H1 (strain CFT073 / ATCC 700928 / UPEC).